The chain runs to 452 residues: Phosphoglucosamine mutase (452 aa).

Ser112 serves as the catalytic Phosphoserine intermediate. Residues Ser112, Asp251, Asp253, and Asp255 each coordinate Mg(2+). Ser112 carries the post-translational modification Phosphoserine.

It belongs to the phosphohexose mutase family. It depends on Mg(2+) as a cofactor. Activated by phosphorylation.

It carries out the reaction alpha-D-glucosamine 1-phosphate = D-glucosamine 6-phosphate. Functionally, catalyzes the conversion of glucosamine-6-phosphate to glucosamine-1-phosphate. The protein is Phosphoglucosamine mutase of Bordetella pertussis (strain Tohama I / ATCC BAA-589 / NCTC 13251).